Consider the following 294-residue polypeptide: Lysozyme M1 (294 aa).

The 214-residue stretch at 81 to 294 (GVQGIDVSHW…RLLALANNTA (214 aa)) folds into the Ch-type lysozyme domain. Residues aspartate 86, aspartate 175, and glutamate 177 contribute to the active site. Cysteine 185 and cysteine 224 are joined by a disulfide.

This sequence belongs to the glycosyl hydrolase 25 family.

Its subcellular location is the secreted. The enzyme catalyses Hydrolysis of (1-&gt;4)-beta-linkages between N-acetylmuramic acid and N-acetyl-D-glucosamine residues in a peptidoglycan and between N-acetyl-D-glucosamine residues in chitodextrins.. This enzyme has both lysozyme (acetylmuramidase) and diacetylmuramidase activities. The chain is Lysozyme M1 (acm) from Streptomyces globisporus.